Here is a 959-residue protein sequence, read N- to C-terminus: Atromentin synthetase invA1 (959 aa).

The segment at 59–466 (DSSIQTKTFS…SGRIKETVIV (408 aa)) is adenylation (A) domain. Residues 598 to 676 (TPQTETEQTL…SLANYIVALK (79 aa)) form the Carrier domain. The segment at 603–673 (TEQTLAAIYA…VVSSLANYIV (71 aa)) is thiolation and peptide carrier (T) domain. An O-(pantetheine 4'-phosphoryl)serine modification is found at Ser635. Residues 699–946 (PIFMVHPGVG…LMDFDHVPGF (248 aa)) are thioesterase (TE) domain.

It belongs to the ATP-dependent AMP-binding enzyme family.

It functions in the pathway secondary metabolite biosynthesis. Functionally, an L-tyrosine:2-oxoglutarate aminotransferase (probably invD) and atromentin synthetase invA1 catalyze consecutive steps to turn over L-tyrosine into atromentin, which represents the generic precursor molecule for the entire terphenylquinone and pulvinic acid family of pigments, which are widely distributed secondary metabolites in homobasidiomycetes. The first step catalyzed by the aminotransferase converts L-tyrosine in to 4-hydroxyphenylpyruvate (4-HPP). Adenylation of two 4-HPP monomers by the invA1 adenylation (A) domain, covalent tethering of the monomers as a thioester and oxoester onto the invA1 thiolation (T) and thioesterase (TE) domains, respectively, and symmetric C-C-bond formation between two monomers catalyzed by the invA1 TE domain leads to atromentin. In Paxillus involutus (Naked brimcap), this protein is Atromentin synthetase invA1 (invA1).